The chain runs to 183 residues: ATP synthase subunit delta (183 aa).

This sequence belongs to the ATPase delta chain family. In terms of assembly, F-type ATPases have 2 components, F(1) - the catalytic core - and F(0) - the membrane proton channel. F(1) has five subunits: alpha(3), beta(3), gamma(1), delta(1), epsilon(1). F(0) has three main subunits: a(1), b(2) and c(10-14). The alpha and beta chains form an alternating ring which encloses part of the gamma chain. F(1) is attached to F(0) by a central stalk formed by the gamma and epsilon chains, while a peripheral stalk is formed by the delta and b chains.

Its subcellular location is the cell inner membrane. Its function is as follows. F(1)F(0) ATP synthase produces ATP from ADP in the presence of a proton or sodium gradient. F-type ATPases consist of two structural domains, F(1) containing the extramembraneous catalytic core and F(0) containing the membrane proton channel, linked together by a central stalk and a peripheral stalk. During catalysis, ATP synthesis in the catalytic domain of F(1) is coupled via a rotary mechanism of the central stalk subunits to proton translocation. Functionally, this protein is part of the stalk that links CF(0) to CF(1). It either transmits conformational changes from CF(0) to CF(1) or is implicated in proton conduction. The sequence is that of ATP synthase subunit delta from Desulfatibacillum aliphaticivorans.